A 246-amino-acid chain; its full sequence is Ribosomal RNA large subunit methyltransferase E (246 aa).

5 residues coordinate S-adenosyl-L-methionine: Gly-81, Trp-83, Asp-104, Asp-120, and Asp-144. The active-site Proton acceptor is the Lys-184.

Belongs to the class I-like SAM-binding methyltransferase superfamily. RNA methyltransferase RlmE family.

It is found in the cytoplasm. It catalyses the reaction uridine(2552) in 23S rRNA + S-adenosyl-L-methionine = 2'-O-methyluridine(2552) in 23S rRNA + S-adenosyl-L-homocysteine + H(+). Its function is as follows. Specifically methylates the uridine in position 2552 of 23S rRNA at the 2'-O position of the ribose in the fully assembled 50S ribosomal subunit. This Agrobacterium fabrum (strain C58 / ATCC 33970) (Agrobacterium tumefaciens (strain C58)) protein is Ribosomal RNA large subunit methyltransferase E.